Here is a 1148-residue protein sequence, read N- to C-terminus: Maintenance of telomere capping protein 5 (1148 aa).

WD repeat units lie at residues 63-106 (HHIT…SNAI), 112-152 (GHSR…RPFY), 156-195 (SWRS…TPLC), 199-239 (GHVS…TESK), and 299-348 (GHSD…YGKV). One can recognise an RWD domain in the interval 432 to 543 (EEVSAIGHKF…RFVLGEKVSL (112 aa)). The residue at position 759 (Ser-759) is a Phosphoserine. Residues 963–990 (THNTLNGSSKFTEPAQKQGSRAISSSPF) are disordered. Positions 964–990 (HNTLNGSSKFTEPAQKQGSRAISSSPF) are enriched in polar residues.

This sequence belongs to the WD repeat WDR59 family. Component of the SEA complex composed of at least IML1/SEA1, RTC1/SEA2, MTC5/SEA3, NPR2, NPR3, SEA4, SEC13 and SEH1.

Its subcellular location is the vacuole membrane. In terms of biological role, component of the SEA complex which coats the vacuolar membrane and is involved in intracellular trafficking, autophagy, response to nitrogen starvation, and amino acid biogenesis. May be involved in telomere capping. This chain is Maintenance of telomere capping protein 5 (MTC5), found in Saccharomyces cerevisiae (strain ATCC 204508 / S288c) (Baker's yeast).